Here is a 286-residue protein sequence, read N- to C-terminus: Elongation factor Ts (286 aa).

The involved in Mg(2+) ion dislocation from EF-Tu stretch occupies residues 82-85; it reads TDFV.

Belongs to the EF-Ts family.

Its subcellular location is the cytoplasm. Functionally, associates with the EF-Tu.GDP complex and induces the exchange of GDP to GTP. It remains bound to the aminoacyl-tRNA.EF-Tu.GTP complex up to the GTP hydrolysis stage on the ribosome. The polypeptide is Elongation factor Ts (Hamiltonella defensa subsp. Acyrthosiphon pisum (strain 5AT)).